Here is a 326-residue protein sequence, read N- to C-terminus: Beta-ketoacyl-[acyl-carrier-protein] synthase III (326 aa).

Catalysis depends on residues cysteine 116 and histidine 253. The segment at 254 to 258 (QANIR) is ACP-binding. The active site involves asparagine 283.

The protein belongs to the thiolase-like superfamily. FabH family. As to quaternary structure, homodimer.

Its subcellular location is the cytoplasm. It catalyses the reaction malonyl-[ACP] + acetyl-CoA + H(+) = 3-oxobutanoyl-[ACP] + CO2 + CoA. Its pathway is lipid metabolism; fatty acid biosynthesis. Functionally, catalyzes the condensation reaction of fatty acid synthesis by the addition to an acyl acceptor of two carbons from malonyl-ACP. Catalyzes the first condensation reaction which initiates fatty acid synthesis and may therefore play a role in governing the total rate of fatty acid production. Possesses both acetoacetyl-ACP synthase and acetyl transacylase activities. Its substrate specificity determines the biosynthesis of branched-chain and/or straight-chain of fatty acids. In Jannaschia sp. (strain CCS1), this protein is Beta-ketoacyl-[acyl-carrier-protein] synthase III.